A 737-amino-acid polypeptide reads, in one-letter code: Polyribonucleotide nucleotidyltransferase (737 aa).

Mg(2+)-binding residues include Asp489 and Asp495. The KH domain occupies 556 to 615; that stretch reads PKIDTIKIDVDKIKIVIGKGGETIDKIIAETGVKIDIDEEGNVSIYSSDQDAINRAKEII. Residues 625-693 form the S1 motif domain; that stretch reads DEVYRAKVVR…EKGRIDASMK (69 aa). The interval 691 to 737 is disordered; sequence SMKALLPRPPKPEHDEKGEKSERPHRPRHHKDHKPKKEFTETPKDSE. The span at 700–714 shows a compositional bias: basic and acidic residues; it reads PKPEHDEKGEKSERP. Over residues 715 to 724 the composition is skewed to basic residues; it reads HRPRHHKDHK. Basic and acidic residues predominate over residues 725 to 737; sequence PKKEFTETPKDSE.

Belongs to the polyribonucleotide nucleotidyltransferase family. Mg(2+) is required as a cofactor.

The protein resides in the cytoplasm. It catalyses the reaction RNA(n+1) + phosphate = RNA(n) + a ribonucleoside 5'-diphosphate. Its function is as follows. Involved in mRNA degradation. Catalyzes the phosphorolysis of single-stranded polyribonucleotides processively in the 3'- to 5'-direction. This Streptococcus pneumoniae (strain 70585) protein is Polyribonucleotide nucleotidyltransferase.